The chain runs to 275 residues: Autophagy-related protein 5 (275 aa).

K129 is covalently cross-linked (Glycyl lysine isopeptide (Lys-Gly) (interchain with G-Cter in lgg-3/ATG12)). Over residues 221–231 the composition is skewed to low complexity; it reads LSSSSSSSTDS. Residues 221-241 are disordered; sequence LSSSSSSSTDSQSEHPPRLIS.

The protein belongs to the ATG5 family. As to quaternary structure, most likely a component of a complex at least containing atg-5, lgg-3/ATG12, atg-16.1 and/or atg-16.2. Interacts with lgg-3/ATG12. Interacts with atg-16.1 (via N-terminus) and atg-16.2 (via N-terminus). Post-translationally, conjugated to lgg-3/ATG12; which is essential for autophagy.

It is found in the preautophagosomal structure membrane. Functionally, involved in autophagic vesicle formation. Conjugation with lgg-3/ATG12, through a ubiquitin-like conjugating system involving atg-7 as an E1-like activating enzyme and atg-10 as an E2-like conjugating enzyme, is essential for its function. Most likely a component of an atg-5-lgg-3-atg-16 complex that promotes autophagosome formation by associating with lgg-2, but not lgg-1, at the preautophagosomal membrane. Probably, as part of an atg-5-lgg-3-atg-16 complex, required for lgg-1 lipidation; the complex acts as an E3-like enzyme promoting atg-3-mediated lgg-1 lipidation. Furthermore, association with atg-16.2 is required for the nucleation of lgg-1 positive autophagic vesicles. This is Autophagy-related protein 5 from Caenorhabditis elegans.